We begin with the raw amino-acid sequence, 93 residues long: Small ribosomal subunit protein uS19 (93 aa).

It belongs to the universal ribosomal protein uS19 family.

Functionally, protein S19 forms a complex with S13 that binds strongly to the 16S ribosomal RNA. The polypeptide is Small ribosomal subunit protein uS19 (Ehrlichia ruminantium (strain Welgevonden)).